We begin with the raw amino-acid sequence, 419 residues long: UDP-N-acetylglucosamine 1-carboxyvinyltransferase (419 aa).

A phosphoenolpyruvate-binding site is contributed by 22-23 (KN). Arginine 93 serves as a coordination point for UDP-N-acetyl-alpha-D-glucosamine. Catalysis depends on cysteine 117, which acts as the Proton donor. At cysteine 117 the chain carries 2-(S-cysteinyl)pyruvic acid O-phosphothioketal. UDP-N-acetyl-alpha-D-glucosamine-binding residues include aspartate 307 and isoleucine 329.

It belongs to the EPSP synthase family. MurA subfamily.

It is found in the cytoplasm. It catalyses the reaction phosphoenolpyruvate + UDP-N-acetyl-alpha-D-glucosamine = UDP-N-acetyl-3-O-(1-carboxyvinyl)-alpha-D-glucosamine + phosphate. It functions in the pathway cell wall biogenesis; peptidoglycan biosynthesis. Cell wall formation. Adds enolpyruvyl to UDP-N-acetylglucosamine. In Shewanella denitrificans (strain OS217 / ATCC BAA-1090 / DSM 15013), this protein is UDP-N-acetylglucosamine 1-carboxyvinyltransferase.